Reading from the N-terminus, the 476-residue chain is Zinc transporter SLC39A7 (476 aa).

A helical membrane pass occupies residues 7–27 (APHWVAVGLLTWAALGLLVAG). Residues 35–109 (HKDVEEDFHG…SHGHSHDSLH (75 aa)) are compositionally biased toward basic and acidic residues. The segment at 35–131 (HKDVEEDFHG…HGTSREAGAP (97 aa)) is disordered. His-73 carries the pros-methylhistidine modification. Residues 110-120 (HGGHGHAHREH) show a composition bias toward basic residues. The next 3 helical transmembrane spans lie at 146-166 (ALGA…LIPV), 177-197 (LQIL…LHLI), and 222-242 (GPIL…LVVE). Residues 249–320 (KGGHGHSHGH…QSPEEEKAGS (72 aa)) form a disordered region. The segment covering 257–292 (GHGDRHAHGDSHTHGDRHECSSKEKPSTEEEKEVGG) has biased composition (basic and acidic residues). At Ser-283 the chain carries Phosphoserine. 2 helical membrane passes run 393–413 (VTAI…GGAV) and 417–437 (VAGG…FIYV).

The protein belongs to the ZIP transporter (TC 2.A.5) family. KE4/Catsup subfamily. As to quaternary structure, homodimer. Post-translationally, methylation at some His residue by METTL9 leads to reduced zinc-binding. Rapidly phosphorylated by CK2 following Zn(2+) treatment. This phosphorylation is required for efficient cytosolic Zn(2+) release. Widely expressed. Highly expressed in the intestinal crypts.

It localises to the endoplasmic reticulum membrane. It is found in the golgi apparatus. The protein localises to the cis-Golgi network membrane. It carries out the reaction Zn(2+)(in) = Zn(2+)(out). Functionally, transports Zn(2+) from the endoplasmic reticulum (ER)/Golgi apparatus to the cytosol, playing an essential role in the regulation of cytosolic zinc levels. Acts as a gatekeeper of zinc release from intracellular stores, requiring post-translational activation by phosphorylation, resulting in activation of multiple downstream pathways leading to cell growth and proliferation. Has an essential role in B cell development and is required for proper B cell receptor signaling. Plays an important role in maintaining intestinal epithelial homeostasis and skin dermis development by regulating ER function. Controls cell signaling pathways involved in glucose metabolism in skeletal muscle. Has a protective role against ER stress in different biological contexts. Mediates Zn(2+)-induced ferroptosis. This Mus musculus (Mouse) protein is Zinc transporter SLC39A7 (Slc39a7).